Consider the following 1199-residue polypeptide: DNA-directed RNA polymerase subunit beta' (1199 aa).

4 residues coordinate Zn(2+): Cys-60, Cys-62, Cys-75, and Cys-78. 3 residues coordinate Mg(2+): Asp-449, Asp-451, and Asp-453. Zn(2+) contacts are provided by Cys-818, Cys-892, Cys-899, and Cys-902.

The protein belongs to the RNA polymerase beta' chain family. In terms of assembly, the RNAP catalytic core consists of 2 alpha, 1 beta, 1 beta' and 1 omega subunit. When a sigma factor is associated with the core the holoenzyme is formed, which can initiate transcription. The cofactor is Mg(2+). Requires Zn(2+) as cofactor.

It carries out the reaction RNA(n) + a ribonucleoside 5'-triphosphate = RNA(n+1) + diphosphate. In terms of biological role, DNA-dependent RNA polymerase catalyzes the transcription of DNA into RNA using the four ribonucleoside triphosphates as substrates. The polypeptide is DNA-directed RNA polymerase subunit beta' (Bacillus licheniformis (strain ATCC 14580 / DSM 13 / JCM 2505 / CCUG 7422 / NBRC 12200 / NCIMB 9375 / NCTC 10341 / NRRL NRS-1264 / Gibson 46)).